Here is a 118-residue protein sequence, read N- to C-terminus: Large ribosomal subunit protein uL18 (118 aa).

It belongs to the universal ribosomal protein uL18 family. In terms of assembly, part of the 50S ribosomal subunit; part of the 5S rRNA/L5/L18/L25 subcomplex. Contacts the 5S and 23S rRNAs.

Functionally, this is one of the proteins that bind and probably mediate the attachment of the 5S RNA into the large ribosomal subunit, where it forms part of the central protuberance. The sequence is that of Large ribosomal subunit protein uL18 from Wolinella succinogenes (strain ATCC 29543 / DSM 1740 / CCUG 13145 / JCM 31913 / LMG 7466 / NCTC 11488 / FDC 602W) (Vibrio succinogenes).